The following is a 392-amino-acid chain: MSHRKYEAPRHGSLAYLPRKRAARHRGKVKSFPKDDAKKPVHLTAAMGYKAGMTTIVRDLDRPGAKAHKKEVVEAVTIIDTPPMIVVGLVGYIETPRGLRSLTTVWAEHLSDEVKRRFYKNWYKSKKKAFTKYVKKHSDNNGAAITRELERIKKYCTVVRVLAHTQIRKTPLKQKKAHLMEIQINGGSVADKVEFGHGLFEKPVSIDSIFEKDEVIDVIAVTKGHGFTGVTARWGTKKLPRKTHKGLRKVACIGAWHPSHVQWTVARAGQAGYHHRTSVNHKIYRIGKGDAEDSAATEVDVTKKKITPMGGFVRYGEINNDFVMVKGSVPGVKKRVMTLRKSMFVHTSRKALEKVELKWIDTSSEFGHGAFQTPAEKKQFQGTLKKDLAASS.

This sequence belongs to the universal ribosomal protein uL3 family. In terms of assembly, component of the large ribosomal subunit (LSU). Mature N.crassa ribosomes consist of a small (40S) and a large (60S) subunit. The 40S small subunit contains 1 molecule of ribosomal RNA (18S rRNA) and at least 32 different proteins. The large 60S subunit contains 3 rRNA molecules (26S, 5.8S and 5S rRNA) and at least 42 different proteins.

It is found in the cytoplasm. Functionally, component of the ribosome, a large ribonucleoprotein complex responsible for the synthesis of proteins in the cell. The small ribosomal subunit (SSU) binds messenger RNAs (mRNAs) and translates the encoded message by selecting cognate aminoacyl-transfer RNA (tRNA) molecules. The large subunit (LSU) contains the ribosomal catalytic site termed the peptidyl transferase center (PTC), which catalyzes the formation of peptide bonds, thereby polymerizing the amino acids delivered by tRNAs into a polypeptide chain. The nascent polypeptides leave the ribosome through a tunnel in the LSU and interact with protein factors that function in enzymatic processing, targeting, and the membrane insertion of nascent chains at the exit of the ribosomal tunnel. The sequence is that of Large ribosomal subunit protein uL3 (rpl-3) from Neurospora crassa (strain ATCC 24698 / 74-OR23-1A / CBS 708.71 / DSM 1257 / FGSC 987).